Here is a 321-residue protein sequence, read N- to C-terminus: Flagellin C (321 aa).

This sequence belongs to the bacterial flagellin family.

Its subcellular location is the secreted. It localises to the bacterial flagellum. Flagellin is the subunit protein which polymerizes to form the filaments of bacterial flagella. This Rhizobium meliloti (strain 1021) (Ensifer meliloti) protein is Flagellin C (flaC).